The sequence spans 245 residues: Precorrin-2 C(20)-methyltransferase (245 aa).

It belongs to the precorrin methyltransferase family. As to quaternary structure, homodimer.

The catalysed reaction is precorrin-2 + S-adenosyl-L-methionine = precorrin-3A + S-adenosyl-L-homocysteine + H(+). The protein operates within cofactor biosynthesis; adenosylcobalamin biosynthesis; cob(II)yrinate a,c-diamide from precorrin-2 (aerobic route): step 1/10. Its function is as follows. Methylates precorrin-2 at the C-20 position to produce precorrin-3A. The polypeptide is Precorrin-2 C(20)-methyltransferase (cobI) (Sinorhizobium sp).